The sequence spans 346 residues: Elongation factor Ts (346 aa).

The segment at 80-83 is involved in Mg(2+) ion dislocation from EF-Tu; sequence TDFV.

This sequence belongs to the EF-Ts family.

The protein localises to the cytoplasm. Functionally, associates with the EF-Tu.GDP complex and induces the exchange of GDP to GTP. It remains bound to the aminoacyl-tRNA.EF-Tu.GTP complex up to the GTP hydrolysis stage on the ribosome. This Streptococcus pyogenes serotype M1 protein is Elongation factor Ts.